Consider the following 270-residue polypeptide: Proteasome inhibitor PI31 subunit (270 aa).

An N-acetylalanine modification is found at alanine 2. The tract at residues 2 to 150 (AGLEVLFASA…PIHEQWEKAN (149 aa)) is important for homodimerization and interaction with FBXO7. Position 152 is a phosphoserine (serine 152). Residue arginine 204 is modified to Omega-N-methylarginine. Arginine 218 is modified (asymmetric dimethylarginine). A disordered region spans residues 220-270 (LIDPSSGLPNRLPPGAVPPGARFDPFGPIGTSPSGPNPDHLPPPGYDDMYL). An Omega-N-methylarginine modification is found at arginine 230. Residue serine 251 is modified to Phosphoserine. Over residues 254–264 (GPNPDHLPPPG) the composition is skewed to pro residues.

Belongs to the proteasome inhibitor PI31 family. Monomer and homodimer. Interacts with FBXO7.

It localises to the cytoplasm. The protein resides in the endoplasmic reticulum. In terms of biological role, plays an important role in control of proteasome function. Inhibits the hydrolysis of protein and peptide substrates by the 20S proteasome. Also inhibits the activation of the proteasome by the proteasome regulatory proteins PA700 and PA28. In Bos taurus (Bovine), this protein is Proteasome inhibitor PI31 subunit (PSMF1).